A 214-amino-acid polypeptide reads, in one-letter code: tRNA (guanine-N(7)-)-methyltransferase (214 aa).

S-adenosyl-L-methionine contacts are provided by E43, E68, D95, and D117. The active site involves D117. Substrate is bound by residues K121, D153, and 190 to 193 (TEYE).

This sequence belongs to the class I-like SAM-binding methyltransferase superfamily. TrmB family.

The enzyme catalyses guanosine(46) in tRNA + S-adenosyl-L-methionine = N(7)-methylguanosine(46) in tRNA + S-adenosyl-L-homocysteine. The protein operates within tRNA modification; N(7)-methylguanine-tRNA biosynthesis. In terms of biological role, catalyzes the formation of N(7)-methylguanine at position 46 (m7G46) in tRNA. In Staphylococcus aureus (strain USA300), this protein is tRNA (guanine-N(7)-)-methyltransferase.